The following is a 289-amino-acid chain: Cyclo(L-tyrosyl-L-tyrosyl) synthase (289 aa).

The interval 1–48 (MSYVAAEPGVLISPTDDLQSPRSAPAAHDENADGITGGTRDDSAPNSR) is disordered. The active-site Nucleophile is Ser-88. Residues Asn-91, 229 to 233 (YICAE), and Tyr-253 contribute to the substrate site.

It belongs to the CDPS family. Homodimer.

It catalyses the reaction 2 L-tyrosyl-tRNA(Tyr) = cyclo(L-tyrosyl-L-tyrosyl) + 2 tRNA(Tyr). Involved in the biosynthesis of mycocyclosin. It uses activated amino acids in the form of aminoacyl-tRNAs (aa-tRNAs) as substrates to catalyze the ATP-independent formation of cyclodipeptides which are intermediates in diketopiperazine (DKP) biosynthetic pathways. Catalyzes the formation of cyclo(L-Tyr-L-Tyr) (cYY) from L-tyrosyl-tRNA(Tyr). This Mycobacterium tuberculosis (strain CDC 1551 / Oshkosh) protein is Cyclo(L-tyrosyl-L-tyrosyl) synthase.